The sequence spans 537 residues: Tyrosine-protein phosphatase CDC14 homolog (537 aa).

Positions 182 to 345 constitute a Tyrosine-protein phosphatase domain; sequence DFNWISPKFI…QVHFRAYFYE (164 aa). The active-site Phosphocysteine intermediate is Cys286. Positions 359–537 are disordered; it reads EPLATPPRHP…PKPSKSRLIS (179 aa). The segment covering 370-382 has biased composition (polar residues); sequence NATNGTSQSNIST. The segment covering 400 to 411 has biased composition (low complexity); the sequence is PPSARRLPSASS. The span at 421–437 shows a compositional bias: polar residues; sequence ASKQSIQNENKASYSSY. Thr453 bears the Phosphothreonine mark. Phosphoserine is present on residues Ser468 and Ser470. The span at 490–502 shows a compositional bias: low complexity; sequence RRTSGNRWSSGSS. Ser513 bears the Phosphoserine mark. Polar residues predominate over residues 514-523; that stretch reads MSSLNNTSNG. The segment covering 526-537 has biased composition (basic residues); sequence AKPKPSKSRLIS.

The protein belongs to the protein-tyrosine phosphatase family. Non-receptor class CDC14 subfamily. Interacts with ark1 at the kinetochores. Interacts with bir1, cdc25, mid1, nbl1, pic1, and rad24. Phosphorylated by cds1, chk1, pmk1, and cdc2 upon Hydroxylurea and H(2)O(2) stress treatment. Phosphorylation regulates the nucleolar-to-nucleoplasmic transition. Is able to autodephosphorylate.

It is found in the nucleus. The protein resides in the nucleolus. It localises to the cytoplasm. The protein localises to the cytoskeleton. Its subcellular location is the microtubule organizing center. It is found in the spindle pole body. It carries out the reaction O-phospho-L-tyrosyl-[protein] + H2O = L-tyrosyl-[protein] + phosphate. Functionally, protein phosphatase which antagonizes mitotic cyclin-dependent kinase cdc2, the inactivation of which is essential for exit from mitosis. To access its substrates, is released from nucleolar sequestration during mitosis. Plays an essential in coordinating the nuclear division cycle with cytokinesis through the cytokinesis checkpoint. Involved in chromosome segregation, where it is required for meiosis I spindle dissambly as well as for establishing two consecutive chromosome segregation phases. Allows damaged actomyosin rings to be maintained to facilitate completion of cell division in response to minor perturbation of the cell division machinery. Dephosphorylates the mitotic inducer cdc25 for its rapid degradation. Down-regulation of cdc25 activity ensures a prompt inactivation of mitotic cdc2 complexes to trigger cell division. Also dephosphorylates cdc2-phosphorylated nsk1, allowing nsk1-binding to kinetochores and spindle. Dephosphorylates ase1, which is essential for spindle midzone assembly and for continuous extension of the anaphase spindle. Tethered to the contractile ring by mid1, where it dephosphorylates cdc15. The polypeptide is Tyrosine-protein phosphatase CDC14 homolog (clp1) (Schizosaccharomyces pombe (strain 972 / ATCC 24843) (Fission yeast)).